The chain runs to 198 residues: Recombination protein RecR (198 aa).

A C4-type zinc finger spans residues Cys-57–Cys-72. A Toprim domain is found at Ser-80–Ser-175.

This sequence belongs to the RecR family.

In terms of biological role, may play a role in DNA repair. It seems to be involved in an RecBC-independent recombinational process of DNA repair. It may act with RecF and RecO. The protein is Recombination protein RecR of Staphylococcus saprophyticus subsp. saprophyticus (strain ATCC 15305 / DSM 20229 / NCIMB 8711 / NCTC 7292 / S-41).